A 688-amino-acid chain; its full sequence is GTPase IMAP family member 8 (688 aa).

The segment covering 1–14 (MATSSHQGAAAGSQ) has biased composition (low complexity). The segment at 1 to 42 (MATSSHQGAAAGSQAEHRSCEASVGQGERPSASQGQEGNFKQ) is disordered. Residues 31 to 42 (SASQGQEGNFKQ) are compositionally biased toward polar residues. AIG1-type G domains lie at 46–247 (TSTL…MESS), 282–472 (MPEL…VIRE), and 473–677 (KELL…GQLK). The segment at 55-62 (GKQGAGKS) is G1. Residues 55 to 63 (GKQGAGKSA) and Ser76 each bind GTP. The interval 82 to 86 (MVTDR) is G2. The interval 103-106 (DTPD) is G3. Residues 172–175 (TRED) are G4. Residues 173-175 (RED) and Asn209 each bind GTP. Positions 208–210 (NNK) are G5.

The protein belongs to the TRAFAC class TrmE-Era-EngA-EngB-Septin-like GTPase superfamily. AIG1/Toc34/Toc159-like paraseptin GTPase family. IAN subfamily. In terms of tissue distribution, abundantly expressed in the thymus (in thymocytes), spleen (in splenocytes), lymph node, followed by bone marrow and lung.

Its subcellular location is the endoplasmic reticulum. It is found in the golgi apparatus. The protein localises to the mitochondrion. The protein resides in the cytoplasm. It localises to the cytosol. Exerts an anti-apoptotic effect in the immune system and is involved in responses to infections. The sequence is that of GTPase IMAP family member 8 (Gimap8) from Mus musculus (Mouse).